A 231-amino-acid polypeptide reads, in one-letter code: Elongation factor 1-delta 2 (231 aa).

Ala-2 bears the N-acetylalanine mark. The GST C-terminal domain maps to 11–73; it reads SGLKKLDEHL…LRISGVSAEG (63 aa). The disordered stretch occupies residues 82–136; that stretch reads SPITEEAVATPPAADSKDTAAEEEDDDDVDLFGEETEEEKKAAEERAASVKASTK. The span at 102-118 shows a compositional bias: acidic residues; it reads AEEEDDDDVDLFGEETE. Residues 119–129 are compositionally biased toward basic and acidic residues; the sequence is EEKKAAEERAA.

This sequence belongs to the EF-1-beta/EF-1-delta family. As to quaternary structure, EF-1 is composed of 4 subunits: alpha, beta (1B-alpha=beta'), delta (1B-beta), and gamma (1B-gamma).

In terms of biological role, EF-1-beta and EF-1-delta stimulate the exchange of GDP bound to EF-1-alpha to GTP. The polypeptide is Elongation factor 1-delta 2 (Arabidopsis thaliana (Mouse-ear cress)).